Reading from the N-terminus, the 248-residue chain is 3-deoxy-manno-octulosonate cytidylyltransferase 2 (248 aa).

This sequence belongs to the KdsB family.

The protein localises to the cytoplasm. It catalyses the reaction 3-deoxy-alpha-D-manno-oct-2-ulosonate + CTP = CMP-3-deoxy-beta-D-manno-octulosonate + diphosphate. Its pathway is nucleotide-sugar biosynthesis; CMP-3-deoxy-D-manno-octulosonate biosynthesis; CMP-3-deoxy-D-manno-octulosonate from 3-deoxy-D-manno-octulosonate and CTP: step 1/1. It participates in bacterial outer membrane biogenesis; lipopolysaccharide biosynthesis. Functionally, activates KDO (a required 8-carbon sugar) for incorporation into bacterial lipopolysaccharide in Gram-negative bacteria. The chain is 3-deoxy-manno-octulosonate cytidylyltransferase 2 from Hydrogenovibrio crunogenus (strain DSM 25203 / XCL-2) (Thiomicrospira crunogena).